Reading from the N-terminus, the 504-residue chain is DnaJ homolog subfamily C member 3 (504 aa).

An N-terminal signal peptide occupies residues 1 to 31; sequence MVAPGSVGSRLGAVFPFLLVLVDLQYEGAEC. TPR repeat units lie at residues 37-70, 72-104, 105-138, 154-187, 188-221, 222-255, 268-301, 306-339, and 340-373; these read VEKHLELGKKLLAAGQLADALSQFHAAVDGDPDN, IAYYRRATVFLAMGKSKAALPDLTKVIALKMDF, TAARLQRGHLLLKQGKLDEAEDDFKKVLKSNPSE, MQRLRSQALDAFDGADYTAAITFLDKILEVCVWD, AELRELRAECFIKEGEPRKAISDLKAASKLKSDN, TEAFYKISTLYYQLGDHELSLSEVRECLKLDQDH, LNKLIESAEELIRDGRYTDATSKYESVMKTEPSV, VRSKERICHCFSKDEKPVEAIRICSEVLQMEPDN, and VNALKDRAEAYLIEEMYDEAIQDYEAAQEHNEND. The cysteines at positions 248 and 258 are disulfide-linked. At Ser274 the chain carries Phosphoserine. The cysteines at positions 313 and 329 are disulfide-linked. A flexible linker region spans residues 375 to 393; it reads QIREGLEKAQRLLKQSQKR. The 69-residue stretch at 394-462 folds into the J domain; the sequence is DYYKILGVKR…EMRKKFDDGE (69 aa). The tract at residues 451-481 is disordered; it reads DPEMRKKFDDGEDPLDAESQQGGGGNPFHRS.

As to quaternary structure, interacts with EIF2AK4/GCN2; this interaction occurs under endoplasmic reticulum (ER) stress, hypothermic and amino acid starving stress conditions and inhibits EIF2AK4/GCN2 kinase activity. Interacts with EIF2AK3. Interacts with EIF2AK2. Forms a trimeric complex with DNAJB1 and HSPA8. Interacts with THAP12. In terms of tissue distribution, widely expressed, with high level in the liver.

Its subcellular location is the endoplasmic reticulum. Functionally, involved in the unfolded protein response (UPR) during endoplasmic reticulum (ER) stress. Acts as a negative regulator of the EIF2AK4/GCN2 kinase activity by preventing the phosphorylation of eIF-2-alpha at 'Ser-52' and hence attenuating general protein synthesis under ER stress, hypothermic and amino acid starving stress conditions. Co-chaperone of HSPA8/HSC70, it stimulates its ATPase activity. May inhibit both the autophosphorylation of EIF2AK2/PKR and the ability of EIF2AK2 to catalyze phosphorylation of the EIF2A. May inhibit EIF2AK3/PERK activity. The protein is DnaJ homolog subfamily C member 3 (Dnajc3) of Mus musculus (Mouse).